The following is a 1427-amino-acid chain: DNA-directed RNA polymerase subunit beta' (1427 aa).

Positions 66, 68, 81, and 84 each coordinate Zn(2+). 3 residues coordinate Mg(2+): Asp472, Asp474, and Asp476. Positions 815, 889, 896, and 899 each coordinate Zn(2+).

Belongs to the RNA polymerase beta' chain family. The RNAP catalytic core consists of 2 alpha, 1 beta, 1 beta' and 1 omega subunit. When a sigma factor is associated with the core the holoenzyme is formed, which can initiate transcription. It depends on Mg(2+) as a cofactor. Requires Zn(2+) as cofactor.

It carries out the reaction RNA(n) + a ribonucleoside 5'-triphosphate = RNA(n+1) + diphosphate. Its function is as follows. DNA-dependent RNA polymerase catalyzes the transcription of DNA into RNA using the four ribonucleoside triphosphates as substrates. The polypeptide is DNA-directed RNA polymerase subunit beta' (Bacteroides fragilis (strain YCH46)).